The following is a 144-amino-acid chain: Large ribosomal subunit protein uL16 (144 aa).

This sequence belongs to the universal ribosomal protein uL16 family. As to quaternary structure, part of the 50S ribosomal subunit.

Functionally, binds 23S rRNA and is also seen to make contacts with the A and possibly P site tRNAs. The polypeptide is Large ribosomal subunit protein uL16 (Halalkalibacterium halodurans (strain ATCC BAA-125 / DSM 18197 / FERM 7344 / JCM 9153 / C-125) (Bacillus halodurans)).